Reading from the N-terminus, the 187-residue chain is Large ribosomal subunit protein uL10 (187 aa).

This sequence belongs to the universal ribosomal protein uL10 family. Part of the ribosomal stalk of the 50S ribosomal subunit. The N-terminus interacts with L11 and the large rRNA to form the base of the stalk. The C-terminus forms an elongated spine to which L12 dimers bind in a sequential fashion forming a multimeric L10(L12)X complex.

In terms of biological role, forms part of the ribosomal stalk, playing a central role in the interaction of the ribosome with GTP-bound translation factors. This is Large ribosomal subunit protein uL10 from Roseiflexus castenholzii (strain DSM 13941 / HLO8).